Reading from the N-terminus, the 1053-residue chain is DNA-directed RNA polymerase subunit beta' (1053 aa).

The Zn(2+) site is built by cysteine 60, cysteine 62, cysteine 75, and cysteine 78. Mg(2+) contacts are provided by aspartate 449, aspartate 451, and aspartate 453. Positions 818, 892, 899, and 902 each coordinate Zn(2+).

This sequence belongs to the RNA polymerase beta' chain family. In terms of assembly, the RNAP catalytic core consists of 2 alpha, 1 beta, 1 beta' and 1 omega subunit. When a sigma factor is associated with the core the holoenzyme is formed, which can initiate transcription. It depends on Mg(2+) as a cofactor. The cofactor is Zn(2+).

The enzyme catalyses RNA(n) + a ribonucleoside 5'-triphosphate = RNA(n+1) + diphosphate. In terms of biological role, DNA-dependent RNA polymerase catalyzes the transcription of DNA into RNA using the four ribonucleoside triphosphates as substrates. The sequence is that of DNA-directed RNA polymerase subunit beta' from Listeria grayi (Listeria murrayi).